Consider the following 362-residue polypeptide: Ribosomal RNA large subunit methyltransferase F (362 aa).

Basic residues predominate over residues 1-28 (MNTPLKPKHGQKTNRKPKANKPVVKKQQ). A disordered region spans residues 1–40 (MNTPLKPKHGQKTNRKPKANKPVVKKQQTKQPPTHKVQGE).

The protein belongs to the methyltransferase superfamily. METTL16/RlmF family.

It localises to the cytoplasm. It carries out the reaction adenosine(1618) in 23S rRNA + S-adenosyl-L-methionine = N(6)-methyladenosine(1618) in 23S rRNA + S-adenosyl-L-homocysteine + H(+). Functionally, specifically methylates the adenine in position 1618 of 23S rRNA. The protein is Ribosomal RNA large subunit methyltransferase F of Vibrio cholerae serotype O1 (strain M66-2).